The following is a 333-amino-acid chain: tRNA-dihydrouridine(16) synthase (333 aa).

FMN is bound by residues 19–21 and Gln80; that span reads PMQ. Catalysis depends on Cys110, which acts as the Proton donor. Residues Lys151, 211–213, and 235–236 contribute to the FMN site; these read NGD and GR.

Belongs to the Dus family. DusC subfamily. Requires FMN as cofactor.

It catalyses the reaction 5,6-dihydrouridine(16) in tRNA + NADP(+) = uridine(16) in tRNA + NADPH + H(+). The enzyme catalyses 5,6-dihydrouridine(16) in tRNA + NAD(+) = uridine(16) in tRNA + NADH + H(+). Functionally, catalyzes the synthesis of 5,6-dihydrouridine (D), a modified base found in the D-loop of most tRNAs, via the reduction of the C5-C6 double bond in target uridines. Specifically modifies U16 in tRNAs. This is tRNA-dihydrouridine(16) synthase from Neisseria meningitidis serogroup B (strain ATCC BAA-335 / MC58).